Consider the following 117-residue polypeptide: Large ribosomal subunit protein uL18 (117 aa).

This sequence belongs to the universal ribosomal protein uL18 family. Part of the 50S ribosomal subunit; part of the 5S rRNA/L5/L18/L25 subcomplex. Contacts the 5S and 23S rRNAs.

In terms of biological role, this is one of the proteins that bind and probably mediate the attachment of the 5S RNA into the large ribosomal subunit, where it forms part of the central protuberance. In Phytoplasma mali (strain AT), this protein is Large ribosomal subunit protein uL18.